A 166-amino-acid polypeptide reads, in one-letter code: Putative tRNA (cytidine(34)-2'-O)-methyltransferase (166 aa).

Leu-83, Gly-109, Ile-130, and Ser-138 together coordinate S-adenosyl-L-methionine.

Belongs to the class IV-like SAM-binding methyltransferase superfamily. RNA methyltransferase TrmH family. TrmL subfamily.

It localises to the cytoplasm. The enzyme catalyses cytidine(34) in tRNA + S-adenosyl-L-methionine = 2'-O-methylcytidine(34) in tRNA + S-adenosyl-L-homocysteine + H(+). It carries out the reaction 5-carboxymethylaminomethyluridine(34) in tRNA(Leu) + S-adenosyl-L-methionine = 5-carboxymethylaminomethyl-2'-O-methyluridine(34) in tRNA(Leu) + S-adenosyl-L-homocysteine + H(+). Its function is as follows. Could methylate the ribose at the nucleotide 34 wobble position in tRNA. The polypeptide is Putative tRNA (cytidine(34)-2'-O)-methyltransferase (Mycoplasma genitalium (strain ATCC 33530 / DSM 19775 / NCTC 10195 / G37) (Mycoplasmoides genitalium)).